Reading from the N-terminus, the 351-residue chain is Columbamine O-methyltransferase (351 aa).

Positions 198, 221, 241, 242, and 255 each coordinate S-adenosyl-L-methionine. His-259 acts as the Proton acceptor in catalysis.

It belongs to the class I-like SAM-binding methyltransferase superfamily. Cation-independent O-methyltransferase family. COMT subfamily. Homodimer.

It carries out the reaction columbamine + S-adenosyl-L-methionine = palmatine + S-adenosyl-L-homocysteine + H(+). It catalyses the reaction (S)-tetrahydrocolumbamine + S-adenosyl-L-methionine = (S)-tetrahydropalmatine + S-adenosyl-L-homocysteine + H(+). Its pathway is alkaloid biosynthesis; palmatine biosynthesis; palmatine from columbamine: step 1/1. Its function is as follows. Catalyzes the conversion of tetrahydrocolumbamine to (S)-tetrahydropalmatine and of columbamine to palmatine, an isoquinoline alkaloid. The protein is Columbamine O-methyltransferase of Coptis japonica (Japanese goldthread).